The primary structure comprises 469 residues: Phosphatidylinositol 4-kinase type 2-beta (469 aa).

The interval 1 to 84 (MAEACEPTRP…LDRTRTTSSE (84 aa)) is disordered. The residue at position 37 (S37) is a Phosphoserine. Residues 108–439 (GVFPERISQG…AQMPCVIVEC (332 aa)) form the PI3K/PI4K catalytic domain. The segment at 114–120 (ISQGSSG) is G-loop. 2 residues coordinate ATP: S121 and K136. The important for substrate binding stretch occupies residues 141–143 (EPY). Residues 149–162 (KWTKYVHKVCCPCC) form an important for interaction with membranes region. Residues 245–248 (QLFV) and 259–260 (RR) each bind ATP. An important for interaction with membranes region spans residues 252–260 (KEAEYWLRR). A catalytic loop region spans residues 289 to 297 (RNTDRGNDN). The tract at residues 330–350 (AIDNGLAFPFKHPDEWRAYPF) is activation loop. D332 lines the ATP pocket. Residues 345 to 354 (WRAYPFHWAW) are important for interaction with membranes.

This sequence belongs to the PI3/PI4-kinase family. Type II PI4K subfamily.

The protein resides in the cytoplasm. It localises to the cytosol. Its subcellular location is the golgi apparatus membrane. The protein localises to the endoplasmic reticulum membrane. It is found in the cell membrane. The protein resides in the early endosome membrane. It catalyses the reaction a 1,2-diacyl-sn-glycero-3-phospho-(1D-myo-inositol) + ATP = a 1,2-diacyl-sn-glycero-3-phospho-(1D-myo-inositol 4-phosphate) + ADP + H(+). Together with PI4K2A and the type III PI4Ks (PIK4CA and PIK4CB) it contributes to the overall PI4-kinase activity of the cell. This contribution may be especially significant in plasma membrane, endosomal and Golgi compartments. The phosphorylation of phosphatidylinositol (PI) to PI4P is the first committed step in the generation of phosphatidylinositol 4,5-bisphosphate (PIP2), a precursor of the second messenger inositol 1,4,5-trisphosphate (InsP3). Contributes to the production of InsP3 in stimulated cells and is likely to be involved in the regulation of vesicular trafficking. The sequence is that of Phosphatidylinositol 4-kinase type 2-beta (Pi4k2b) from Mus musculus (Mouse).